We begin with the raw amino-acid sequence, 82 residues long: uncharacterized protein (82 aa).

2 helical membrane-spanning segments follow: residues 32–52 and 59–79; these read PFSI…IGIL and SKPL…FNII.

It is found in the cell membrane. This is an uncharacterized protein from Rickettsia prowazekii (strain Madrid E).